We begin with the raw amino-acid sequence, 729 residues long: Capsid protein VP1 (729 aa).

The span at 1 to 10 (MAPPAKRAKR) shows a compositional bias: basic residues. 3 disordered regions span residues 1 to 39 (MAPP…DAAA), 96 to 115 (LATD…KRTR), and 130 to 185 (KLTS…VGVS). The short motif at 4 to 13 (PAKRAKRGWV) is the Nuclear localization signal element. The interval 19–64 (YLGPGNSLDQGEPTNPSDAAAKEHDEAYDQYIKSGKNPYLYFSAAD) is phospholipase A2-like. The segment covering 25–35 (SLDQGEPTNPS) has biased composition (polar residues). Over residues 132 to 142 (TSSAAQQSSQT) the composition is skewed to low complexity. Gly residues predominate over residues 168–184 (GPGGSGGGGSGGGGVGV). Asn-325 contributes to the Mg(2+) binding site.

This sequence belongs to the parvoviridae capsid protein family.

It localises to the virion. Its subcellular location is the host nucleus. Its function is as follows. Capsid protein self-assembles to form an icosahedral capsid with a T=1 symmetry, about 22 nm in diameter, and consisting of 60 copies of two size variants of the capsid proteins, VP1 and VP2, which differ by the presence of an N-terminal extension in the minor protein VP1. The capsid encapsulates the genomic ssDNA. Capsid proteins are responsible for the attachment to host cell receptors. This attachment induces virion internalization predominantly through clathrin-dependent endocytosis. Binding to the host receptors also induces capsid rearrangements leading to surface exposure of VP1 N-terminus, specifically its phospholipase A2-like region and putative nuclear localization signal(s). VP1 N-terminus might serve as a lipolytic enzyme to breach the endosomal membrane during entry into host cell and might contribute to virus transport to the nucleus. The sequence is that of Capsid protein VP1 from Mus musculus (Mouse).